A 257-amino-acid polypeptide reads, in one-letter code: 1-(5-phosphoribosyl)-5-[(5-phosphoribosylamino)methylideneamino] imidazole-4-carboxamide isomerase (257 aa).

The active-site Proton acceptor is D8. D129 functions as the Proton donor in the catalytic mechanism.

This sequence belongs to the HisA/HisF family.

It localises to the cytoplasm. It catalyses the reaction 1-(5-phospho-beta-D-ribosyl)-5-[(5-phospho-beta-D-ribosylamino)methylideneamino]imidazole-4-carboxamide = 5-[(5-phospho-1-deoxy-D-ribulos-1-ylimino)methylamino]-1-(5-phospho-beta-D-ribosyl)imidazole-4-carboxamide. It participates in amino-acid biosynthesis; L-histidine biosynthesis; L-histidine from 5-phospho-alpha-D-ribose 1-diphosphate: step 4/9. The polypeptide is 1-(5-phosphoribosyl)-5-[(5-phosphoribosylamino)methylideneamino] imidazole-4-carboxamide isomerase (Trichodesmium erythraeum (strain IMS101)).